We begin with the raw amino-acid sequence, 210 residues long: Large ribosomal subunit protein uL3 (210 aa).

A compositionally biased stretch (polar residues) spans 131 to 140 (NRASHGNSLS). The tract at residues 131 to 150 (NRASHGNSLSHRAPGSIGCR) is disordered. Gln151 is modified (N5-methylglutamine).

Belongs to the universal ribosomal protein uL3 family. In terms of assembly, part of the 50S ribosomal subunit. Forms a cluster with proteins L14 and L19. Post-translationally, methylated by PrmB.

One of the primary rRNA binding proteins, it binds directly near the 3'-end of the 23S rRNA, where it nucleates assembly of the 50S subunit. This is Large ribosomal subunit protein uL3 from Acidithiobacillus ferrooxidans (strain ATCC 23270 / DSM 14882 / CIP 104768 / NCIMB 8455) (Ferrobacillus ferrooxidans (strain ATCC 23270)).